The following is a 266-amino-acid chain: Protein crossbronx-like (266 aa).

The region spanning 15–178 (KQGYHILAEY…VQEQAIASRN (164 aa)) is the UBC core domain.

The protein belongs to the ubiquitin-conjugating enzyme family. FTS subfamily.

In Drosophila erecta (Fruit fly), this protein is Protein crossbronx-like.